Consider the following 332-residue polypeptide: Transcription factor HBP-1b(c38) (332 aa).

The disordered stretch occupies residues 1–48 (MAEASPRTETSTDDTDENLMLEPGNAALAVVSDSSDRSRDKNGDQKTM). Basic and acidic residues predominate over residues 34–47 (SSDRSRDKNGDQKT). A bZIP domain is found at 44 to 107 (DQKTMRRLAQ…SSADQSHSMS (64 aa)). Residues 46–66 (KTMRRLAQNREAARKSRLRKK) form a basic motif region. Positions 47-142 (TMRRLAQNRE…RAAVNAHAGD (96 aa)) form a coiled coil. Residues 72–86 (LENSRLKLTQLEQEL) form a leucine-zipper region. One can recognise a DOG1 domain in the interval 111–329 (ALAFDTEYAR…RALSSLWLAR (219 aa)).

This sequence belongs to the bZIP family. Binds DNA as a dimer.

The protein resides in the nucleus. Functionally, transcriptional activator that binds specifically to the DNA sequence 5'-TGACG-3'. Recognizes ocs elements like the as-1 motif of the cauliflower mosaic virus 35S promoter. Binding to the as-1-like cis elements mediate auxin- and salicylic acid-inducible transcription. Binds to the hexamer motif 5'-ACGTCA-3' of histone gene promoters. The polypeptide is Transcription factor HBP-1b(c38) (Triticum aestivum (Wheat)).